Consider the following 98-residue polypeptide: Integration host factor subunit alpha (98 aa).

Residues 49–71 (FGNFDLRDKNQRPGRNPKTGEDI) form a disordered region.

This sequence belongs to the bacterial histone-like protein family. As to quaternary structure, heterodimer of an alpha and a beta chain.

In terms of biological role, this protein is one of the two subunits of integration host factor, a specific DNA-binding protein that functions in genetic recombination as well as in transcriptional and translational control. This chain is Integration host factor subunit alpha, found in Shewanella sp. (strain MR-4).